The chain runs to 518 residues: MSISHPDTVLIIDFGSQVTQLIARRVRAMGVYCEIVPFQLALEGVKRLRPQAVILSGSPYSVIDDGSPRAPMEIFEIGVPVLGICYGEQVMCVQLGGKVESGHRREFGRAFLEVQEKSALFDGVWEKGSCYQVWMSHGDHVAALPEGFRVIGTSKGAPYAAIADEKRCLYAVQFHPEVVHTPDGTKLLQNFVHKISGLKGNWSMASYRDQAIATIRKKVGKSRVICGLSGGVDSSVVAVLLHEAIGDQLTCILVDHGLMRKNEAEEVLKLFRDHYNIELIHVNAANIFLNALEGETDPEKKRKTIGRLFIEVFEEETKKIEGVEFLAQGTLYPDVIESVSAIGESVTIKSHHNVGGLPERMNMKLVEPLRELFKDEVRSLGRELGLPEQFLGRHPFPGPGLAIRCPGAVTREKLEIIREADAIYLDEICKAGLYDEIWQAFVVLLPVQTVGVMGDGRTYEFVCALRAVTSVDGMTADFYPYDMEFLSKTAARIINEVRGINRVVYDITSKPPGTIEWE.

The Glutamine amidotransferase type-1 domain maps to 8-201 (TVLIIDFGSQ…VHKISGLKGN (194 aa)). The active-site Nucleophile is the Cys85. Active-site residues include His175 and Glu177. The 192-residue stretch at 202–393 (WSMASYRDQA…LGLPEQFLGR (192 aa)) folds into the GMPS ATP-PPase domain. 229 to 235 (SGGVDSS) serves as a coordination point for ATP.

In terms of assembly, homodimer.

It catalyses the reaction XMP + L-glutamine + ATP + H2O = GMP + L-glutamate + AMP + diphosphate + 2 H(+). It functions in the pathway purine metabolism; GMP biosynthesis; GMP from XMP (L-Gln route): step 1/1. In terms of biological role, catalyzes the synthesis of GMP from XMP. The chain is GMP synthase [glutamine-hydrolyzing] from Bartonella quintana (strain Toulouse) (Rochalimaea quintana).